The following is a 153-amino-acid chain: MATLYDVPPEELIEALTETLADEDDIEAPDWAEFTKTGVDRELPPEQEDFWTRRAASLLRKVAVDGPVGVNALRSEYGTSKQGTTRYRVRPHQKTKGSGNIIRTALQQLEDAGYVETSENDGRRVTGDGRSLLDDTAGDLLTELDRPELERYA.

2 disordered regions span residues 77-99 (YGTSKQGTTRYRVRPHQKTKGSG) and 113-139 (GYVETSENDGRRVTGDGRSLLDDTAGD). The segment covering 120–133 (NDGRRVTGDGRSLL) has biased composition (basic and acidic residues).

Belongs to the eukaryotic ribosomal protein eS19 family. In terms of assembly, part of the 30S ribosomal subunit.

May be involved in maturation of the 30S ribosomal subunit. The chain is Small ribosomal subunit protein eS19 from Haloarcula marismortui (strain ATCC 43049 / DSM 3752 / JCM 8966 / VKM B-1809) (Halobacterium marismortui).